Here is a 143-residue protein sequence, read N- to C-terminus: Hemoglobin subunit alpha-2 (143 aa).

Position 2 is an N-acetylserine (Ser-2). The region spanning 2 to 143 (SLTEKDKAAV…LSLALAEKYR (142 aa)) is the Globin domain. Position 60 (His-60) interacts with O2. His-89 serves as a coordination point for heme b.

It belongs to the globin family. Hb2 is a heterotetramer of two alpha-2 chains and two beta-1 chains; Hb3 is a heterotetramer of two alpha-2 chains and two beta-2 chains. As to expression, red blood cells.

Functionally, involved in oxygen transport from gills to the various peripheral tissues. This is Hemoglobin subunit alpha-2 (hba2) from Anarhichas minor (Arctic spotted wolffish).